A 179-amino-acid polypeptide reads, in one-letter code: Replication restart protein DnaT (179 aa).

The disordered stretch occupies residues 156 to 179 (GGLPKRDVNTVSEPDSQIPPGFRG).

The protein belongs to the DnaT family. In terms of assembly, homooligomerizes. Interacts with PriB. Component of the replication restart primosome. Primosome assembly occurs via a 'hand-off' mechanism. PriA binds to replication forks, subsequently PriB then DnaT bind; DnaT then displaces ssDNA to generate the helicase loading substrate.

Involved in the restart of stalled replication forks, which reloads the replicative helicase on sites other than the origin of replication. Can function in multiple replication restart pathways. Displaces ssDNA from a PriB-ssDNA complex. Probably forms a spiral filament on ssDNA. This is Replication restart protein DnaT from Escherichia coli O7:K1 (strain IAI39 / ExPEC).